Reading from the N-terminus, the 156-residue chain is Small ribosomal subunit protein uS7 (156 aa).

It belongs to the universal ribosomal protein uS7 family. As to quaternary structure, part of the 30S ribosomal subunit. Contacts proteins S9 and S11.

Its function is as follows. One of the primary rRNA binding proteins, it binds directly to 16S rRNA where it nucleates assembly of the head domain of the 30S subunit. Is located at the subunit interface close to the decoding center, probably blocks exit of the E-site tRNA. This Pseudomonas syringae pv. tomato (strain ATCC BAA-871 / DC3000) protein is Small ribosomal subunit protein uS7.